The following is a 378-amino-acid chain: 4-hydroxy-3-methylbut-2-en-1-yl diphosphate synthase (flavodoxin) (378 aa).

Positions 268, 271, 303, and 310 each coordinate [4Fe-4S] cluster.

The protein belongs to the IspG family. It depends on [4Fe-4S] cluster as a cofactor.

The enzyme catalyses (2E)-4-hydroxy-3-methylbut-2-enyl diphosphate + oxidized [flavodoxin] + H2O + 2 H(+) = 2-C-methyl-D-erythritol 2,4-cyclic diphosphate + reduced [flavodoxin]. It functions in the pathway isoprenoid biosynthesis; isopentenyl diphosphate biosynthesis via DXP pathway; isopentenyl diphosphate from 1-deoxy-D-xylulose 5-phosphate: step 5/6. Converts 2C-methyl-D-erythritol 2,4-cyclodiphosphate (ME-2,4cPP) into 1-hydroxy-2-methyl-2-(E)-butenyl 4-diphosphate. This chain is 4-hydroxy-3-methylbut-2-en-1-yl diphosphate synthase (flavodoxin), found in Corynebacterium glutamicum (strain ATCC 13032 / DSM 20300 / JCM 1318 / BCRC 11384 / CCUG 27702 / LMG 3730 / NBRC 12168 / NCIMB 10025 / NRRL B-2784 / 534).